Consider the following 383-residue polypeptide: Homeobox protein SHOOT MERISTEMLESS (383 aa).

The segment at 37–58 (HQQHHGHDQQHQHQQQHDGYAY) is disordered. The ELK domain maps to 263-283 (ELKGQLLRKYSGYLGSLKQEF). The segment at residues 284 to 347 (MKKRKKGKLP…NQRKRHWKPS (64 aa)) is a DNA-binding region (homeobox; TALE-type).

The protein belongs to the TALE/KNOX homeobox family.

The protein localises to the nucleus. Its function is as follows. Required for shoot apical meristem formation during embryogenesis. Probably binds to the DNA sequence 5'-TGAC-3'. The sequence is that of Homeobox protein SHOOT MERISTEMLESS (STM) from Brassica oleracea (Wild cabbage).